A 384-amino-acid polypeptide reads, in one-letter code: MSEQLVTPENVTTKDGKINLLDLNRQQMREFFKDLGEKTFRADQVMKWMYHYCCDNFDEMTDINKVLRGKLKEVAEIRAPEVVEEQRSSDGTIKWAIAVGDQRVETVYIPEDDRATLCVSSQVGCALECKFCSTAQQGFNRNLRVSEIIGQVWRAAKIVGAAKVTGQRPITNVVMMGMGEPLLNLNNVVPAMEIMLDDFGFGLSKRRVTLSTSGVVPALDKLGDMIDVALAISLHAPNDEIRDEIVPINKKYNIETFLAAVRRYLEKSNANQGRVTIEYVMLDHVNDGTEHAHQLAELLKDTPCKINLIPWNPFPDAPYGRSSNSRIDRFSKVLMSYGFTTIVRKTRGDDIDAACGQLAGDVIDRTKRTLRKRMQGEAIDIKAV.

Glu105 acts as the Proton acceptor in catalysis. Residues 111–350 form the Radical SAM core domain; sequence EDDRATLCVS…TIVRKTRGDD (240 aa). Residues Cys118 and Cys355 are joined by a disulfide bond. The [4Fe-4S] cluster site is built by Cys125, Cys129, and Cys132. Residues 179–180, Ser211, 233–235, and Asn312 contribute to the S-adenosyl-L-methionine site; these read GE and SLH. Cys355 functions as the S-methylcysteine intermediate in the catalytic mechanism.

The protein belongs to the radical SAM superfamily. RlmN family. It depends on [4Fe-4S] cluster as a cofactor.

The protein localises to the cytoplasm. The catalysed reaction is adenosine(2503) in 23S rRNA + 2 reduced [2Fe-2S]-[ferredoxin] + 2 S-adenosyl-L-methionine = 2-methyladenosine(2503) in 23S rRNA + 5'-deoxyadenosine + L-methionine + 2 oxidized [2Fe-2S]-[ferredoxin] + S-adenosyl-L-homocysteine. It catalyses the reaction adenosine(37) in tRNA + 2 reduced [2Fe-2S]-[ferredoxin] + 2 S-adenosyl-L-methionine = 2-methyladenosine(37) in tRNA + 5'-deoxyadenosine + L-methionine + 2 oxidized [2Fe-2S]-[ferredoxin] + S-adenosyl-L-homocysteine. Its function is as follows. Specifically methylates position 2 of adenine 2503 in 23S rRNA and position 2 of adenine 37 in tRNAs. m2A2503 modification seems to play a crucial role in the proofreading step occurring at the peptidyl transferase center and thus would serve to optimize ribosomal fidelity. In Shigella flexneri serotype 5b (strain 8401), this protein is Dual-specificity RNA methyltransferase RlmN.